Consider the following 535-residue polypeptide: Succinate-semialdehyde dehydrogenase, mitochondrial (535 aa).

The N-terminal 47 residues, 1 to 47, are a transit peptide targeting the mitochondrion; sequence MATCIWLRSCGARRLGSTFPGCRLRPRAGGLVPASGPAPGPAQLRCY. N6-acetyllysine; alternate is present on Lys-126. N6-succinyllysine; alternate is present on Lys-126. N6-succinyllysine is present on residues Lys-135 and Lys-184. NAD(+) contacts are provided by residues Arg-213 and 228–231; that span reads KPAE. Position 213 (Arg-213) interacts with substrate. Lys-265 bears the N6-acetyllysine; alternate mark. Position 265 is an N6-succinyllysine; alternate (Lys-265). 284–289 contributes to the NAD(+) binding site; sequence GSTTTG. Catalysis depends on Glu-306, which acts as the Proton acceptor. Substrate is bound at residue Arg-334. Cys-340 acts as the Nucleophile in catalysis. Cys-340 and Cys-342 are oxidised to a cystine. Lys-365 carries the N6-acetyllysine modification. At Lys-402 the chain carries N6-succinyllysine. Lys-411 carries the post-translational modification N6-acetyllysine. A substrate-binding site is contributed by Ser-498. The residue at position 499 (Ser-499) is a Phosphoserine.

The protein belongs to the aldehyde dehydrogenase family. In terms of assembly, homotetramer.

It is found in the mitochondrion. It carries out the reaction succinate semialdehyde + NAD(+) + H2O = succinate + NADH + 2 H(+). It functions in the pathway amino-acid degradation; 4-aminobutanoate degradation. Its activity is regulated as follows. Redox-regulated. Inhibited under oxydizing conditions. Functionally, catalyzes one step in the degradation of the inhibitory neurotransmitter gamma-aminobutyric acid (GABA). In Pan troglodytes (Chimpanzee), this protein is Succinate-semialdehyde dehydrogenase, mitochondrial (ALDH5A1).